A 525-amino-acid polypeptide reads, in one-letter code: GMP synthase [glutamine-hydrolyzing] (525 aa).

In terms of domain architecture, Glutamine amidotransferase type-1 spans 8–206 (PLLILDFGSQ…VVDICKASTD (199 aa)). Cys-85 acts as the Nucleophile in catalysis. Residues His-180 and Glu-182 contribute to the active site. Residues 207–400 (WTPEHIIDEA…LGLPHDMVYR (194 aa)) form the GMPS ATP-PPase domain. 234-240 (SGGVDSS) lines the ATP pocket.

As to quaternary structure, homodimer.

It catalyses the reaction XMP + L-glutamine + ATP + H2O = GMP + L-glutamate + AMP + diphosphate + 2 H(+). The protein operates within purine metabolism; GMP biosynthesis; GMP from XMP (L-Gln route): step 1/1. Functionally, catalyzes the synthesis of GMP from XMP. This Legionella pneumophila subsp. pneumophila (strain Philadelphia 1 / ATCC 33152 / DSM 7513) protein is GMP synthase [glutamine-hydrolyzing].